Consider the following 240-residue polypeptide: MSKAGGNKGGVKTGGRGGAGSSNLQVRVKKKAGTIKESSRRWLQRHLNDPYVHKSRQDGYRSRAAYKLIEINDRYDLLKKGQKIIDLGAAPGGWSQIAAKIVGSTDENPHVVGIDYLHVDPLPGVVLLEMDFLDDEAPQKLMDALGDKPDLVISDMAAPTTGHRRTDHLRTVHLCEVAADFAISVLKPGGHFLTKTFQGGTENELLALLKQKFRSVHHVKPPASRAESVELYLLARDFKG.

Gly residues predominate over residues 1 to 20; that stretch reads MSKAGGNKGGVKTGGRGGAG. Positions 1–27 are disordered; sequence MSKAGGNKGGVKTGGRGGAGSSNLQVR. S-adenosyl-L-methionine-binding residues include Gly92, Trp94, Asp115, Asp131, and Asp155. The active-site Proton acceptor is the Lys195.

This sequence belongs to the class I-like SAM-binding methyltransferase superfamily. RNA methyltransferase RlmE family.

The protein localises to the cytoplasm. The enzyme catalyses uridine(2552) in 23S rRNA + S-adenosyl-L-methionine = 2'-O-methyluridine(2552) in 23S rRNA + S-adenosyl-L-homocysteine + H(+). Specifically methylates the uridine in position 2552 of 23S rRNA at the 2'-O position of the ribose in the fully assembled 50S ribosomal subunit. The sequence is that of Ribosomal RNA large subunit methyltransferase E from Brucella anthropi (strain ATCC 49188 / DSM 6882 / CCUG 24695 / JCM 21032 / LMG 3331 / NBRC 15819 / NCTC 12168 / Alc 37) (Ochrobactrum anthropi).